The primary structure comprises 624 residues: Diatom spindle kinesin-1 (624 aa).

Positions M1–N59 are disordered. The globular stretch occupies residues M1 to P85. Composition is skewed to basic and acidic residues over residues G17–R33 and Q42–N54. The Kinesin motor domain maps to N95–Q411. G186–T193 contributes to the ATP binding site. Residues S426–Y624 adopt a coiled-coil conformation. The segment covering V478–V511 has biased composition (acidic residues). Residues V478–L528 are disordered.

It belongs to the TRAFAC class myosin-kinesin ATPase superfamily. Kinesin family. MCAK/KIF2 subfamily.

The protein resides in the cytoplasm. It is found in the cytoskeleton. Functionally, involved in anaphase spindle elongation. The polypeptide is Diatom spindle kinesin-1 (DSK1) (Cylindrotheca fusiformis (Marine diatom)).